Consider the following 129-residue polypeptide: Large ribosomal subunit protein bL21 (129 aa).

It belongs to the bacterial ribosomal protein bL21 family. As to quaternary structure, part of the 50S ribosomal subunit. Contacts protein L20.

Functionally, this protein binds to 23S rRNA in the presence of protein L20. The sequence is that of Large ribosomal subunit protein bL21 from Prochlorococcus marinus (strain MIT 9313).